The sequence spans 332 residues: Large ribosomal subunit protein uL29m (332 aa).

The segment at 19–40 is disordered; the sequence is RFTKPKPKPAKRENVRLPTQRT. The stretch at 264–327 forms a coiled coil; that stretch reads TSENTESAIA…IQLQEEDAKN (64 aa).

It belongs to the universal ribosomal protein uL29 family. In terms of assembly, component of the mitochondrial large ribosomal subunit. Mature mitochondrial ribosomes consist of a small (37S) and a large (54S) subunit. The 37S subunit contains at least 33 different proteins and 1 molecule of RNA (15S). The 54S subunit contains at least 45 different proteins and 1 molecule of RNA (21S).

It localises to the mitochondrion. The chain is Large ribosomal subunit protein uL29m (MRPL4) from Kluyveromyces lactis (strain ATCC 8585 / CBS 2359 / DSM 70799 / NBRC 1267 / NRRL Y-1140 / WM37) (Yeast).